The primary structure comprises 153 residues: Cytochrome c-type biogenesis protein CcmE (153 aa).

Over 1–8 (MTTRRGRR) the chain is Cytoplasmic. Residues 9–29 (ALLIAGGVGLLALAAALVLNA) form a helical; Signal-anchor for type II membrane protein membrane-spanning segment. At 30–153 (LRSNLVFFFS…PSATLQTEAR (124 aa)) the chain is on the periplasmic side. Heme-binding residues include H124 and Y128.

This sequence belongs to the CcmE/CycJ family.

It localises to the cell inner membrane. Its function is as follows. Heme chaperone required for the biogenesis of c-type cytochromes. Transiently binds heme delivered by CcmC and transfers the heme to apo-cytochromes in a process facilitated by CcmF and CcmH. The protein is Cytochrome c-type biogenesis protein CcmE of Bordetella parapertussis (strain 12822 / ATCC BAA-587 / NCTC 13253).